A 937-amino-acid chain; its full sequence is Alanine--tRNA ligase (937 aa).

Zn(2+) contacts are provided by His-626, His-630, Cys-727, and His-731.

It belongs to the class-II aminoacyl-tRNA synthetase family. Zn(2+) is required as a cofactor.

It is found in the cytoplasm. It carries out the reaction tRNA(Ala) + L-alanine + ATP = L-alanyl-tRNA(Ala) + AMP + diphosphate. Catalyzes the attachment of alanine to tRNA(Ala) in a two-step reaction: alanine is first activated by ATP to form Ala-AMP and then transferred to the acceptor end of tRNA(Ala). Also edits incorrectly charged Ser-tRNA(Ala) and Gly-tRNA(Ala) via its editing domain. This is Alanine--tRNA ligase from Opitutus terrae (strain DSM 11246 / JCM 15787 / PB90-1).